A 431-amino-acid polypeptide reads, in one-letter code: 3-phosphoshikimate 1-carboxyvinyltransferase (431 aa).

3 residues coordinate 3-phosphoshikimate: K21, S22, and R26. K21 lines the phosphoenolpyruvate pocket. Phosphoenolpyruvate contacts are provided by G94 and R122. Positions 167, 169, 315, and 342 each coordinate 3-phosphoshikimate. Residue Q169 coordinates phosphoenolpyruvate. Residue D315 is the Proton acceptor of the active site. Phosphoenolpyruvate contacts are provided by R346 and R388.

Belongs to the EPSP synthase family. Monomer.

It is found in the cytoplasm. It carries out the reaction 3-phosphoshikimate + phosphoenolpyruvate = 5-O-(1-carboxyvinyl)-3-phosphoshikimate + phosphate. Its pathway is metabolic intermediate biosynthesis; chorismate biosynthesis; chorismate from D-erythrose 4-phosphate and phosphoenolpyruvate: step 6/7. Its function is as follows. Catalyzes the transfer of the enolpyruvyl moiety of phosphoenolpyruvate (PEP) to the 5-hydroxyl of shikimate-3-phosphate (S3P) to produce enolpyruvyl shikimate-3-phosphate and inorganic phosphate. The polypeptide is 3-phosphoshikimate 1-carboxyvinyltransferase (Pelotomaculum thermopropionicum (strain DSM 13744 / JCM 10971 / SI)).